The primary structure comprises 304 residues: Glycine--tRNA ligase alpha subunit (304 aa).

The protein belongs to the class-II aminoacyl-tRNA synthetase family. Tetramer of two alpha and two beta subunits.

The protein resides in the cytoplasm. The enzyme catalyses tRNA(Gly) + glycine + ATP = glycyl-tRNA(Gly) + AMP + diphosphate. The protein is Glycine--tRNA ligase alpha subunit of Yersinia enterocolitica serotype O:8 / biotype 1B (strain NCTC 13174 / 8081).